The chain runs to 4116 residues: Dynein axonemal heavy chain 3 (4116 aa).

2 disordered regions span residues 1–68 (MGAT…ANEE) and 137–172 (VPRD…KEDS). Residues 1-1390 (MGATGRLELT…QVQIITTEAL (1390 aa)) are stem. Positions 145 to 156 (GLPSSGNRSSSE) are enriched in polar residues. Positions 785 to 852 (DLIKRCSEFE…NKEEELLEKE (68 aa)) form a coiled coil. AAA regions lie at residues 1391 to 1612 (YGYE…VLTA), 1672 to 1903 (KVLN…LHCK), 2036 to 2284 (KVPA…VIQG), and 2395 to 2646 (EFNN…LRRH). ATP contacts are provided by residues 1429-1436 (GPAGTGKT), 1710-1717 (GDPMGGKT), 2074-2081 (GPTGTGKS), and 2434-2441 (GIGGSGRQ). Residues 2661-2960 (FKTLLNSKRQ…KDLEENIEIC (300 aa)) form a stalk region. AAA stretches follow at residues 3045-3275 (LGDP…EISE) and 3488-3712 (VREF…QIQM).

The protein belongs to the dynein heavy chain family. Consists of at least two heavy chains and a number of intermediate and light chains. In terms of tissue distribution, expressed primarily in trachea and testis, 2 tissues containing axonemal structures. Also expressed in lung.

Its subcellular location is the cytoplasm. The protein localises to the cytoskeleton. It is found in the cilium axoneme. Force generating protein of respiratory cilia. Produces force towards the minus ends of microtubules. Dynein has ATPase activity; the force-producing power stroke is thought to occur on release of ADP. Involved in sperm motility; implicated in sperm flagellar assembly. This chain is Dynein axonemal heavy chain 3 (DNAH3), found in Homo sapiens (Human).